A 170-amino-acid chain; its full sequence is Adenine phosphoribosyltransferase (170 aa).

This sequence belongs to the purine/pyrimidine phosphoribosyltransferase family. As to quaternary structure, homodimer.

It is found in the cytoplasm. The catalysed reaction is AMP + diphosphate = 5-phospho-alpha-D-ribose 1-diphosphate + adenine. It participates in purine metabolism; AMP biosynthesis via salvage pathway; AMP from adenine: step 1/1. Catalyzes a salvage reaction resulting in the formation of AMP, that is energically less costly than de novo synthesis. This Flavobacterium johnsoniae (strain ATCC 17061 / DSM 2064 / JCM 8514 / BCRC 14874 / CCUG 350202 / NBRC 14942 / NCIMB 11054 / UW101) (Cytophaga johnsonae) protein is Adenine phosphoribosyltransferase.